The primary structure comprises 2382 residues: Highly reducing polyketide synthase srdA (2382 aa).

The disordered stretch occupies residues 1–25 (MAPHSTLDSDYSSGSSTPTSASAAG). The Ketosynthase family 3 (KS3) domain maps to 44-474 (QEPIAIIGMG…GANAHAILEA (431 aa)). Residues Cys-217, His-352, and His-390 each act as for beta-ketoacyl synthase activity in the active site. The tract at residues 580-891 (VFTGQGAQWP…HYGSALSRGK (312 aa)) is malonyl-CoA:ACP transacylase (MAT) domain. Ser-672 (for malonyltransferase activity) is an active-site residue. The tract at residues 971–1108 (HDLLGSQVHG…GLVKIDSAPA (138 aa)) is N-terminal hotdog fold. The segment at 971–1274 (HDLLGSQVHG…RQVSYQSGIQ (304 aa)) is dehydratase (DH) domain. Positions 971–1275 (HDLLGSQVHG…QVSYQSGIQQ (305 aa)) constitute a PKS/mFAS DH domain. The active-site Proton acceptor; for dehydratase activity is His-1003. The interval 1121-1275 (MEPQAPRTWY…QVSYQSGIQQ (155 aa)) is C-terminal hotdog fold. Residue Asp-1189 is the Proton donor; for dehydratase activity of the active site. An enoyl reductase (ER) domain region spans residues 1668 to 1979 (GQIDSIFFRR…AKGHSGSVVV (312 aa)). The ketoreductase (KR) domain stretch occupies residues 2004-2180 (SYLLVGCLGG…ATSIGLGMIS (177 aa)). One can recognise a Carrier domain in the interval 2298-2376 (SVEDAVLKMI…LLSELITKKM (79 aa)). Ser-2335 bears the O-(pantetheine 4'-phosphoryl)serine mark.

Functionally, highly reducing polyketide synthase; part of the gene cluster that mediates the biosynthesis of sordarial, a salicylic aldehyde structurally related to the phytotoxin pyriculol. The most interesting aspect of this pathway is formation of an aromatic product from the highly reducing polyketide synthase srdA. SrdA synthesizes a reduced polyketide chain from one molecule of acetyl-CoA and five molecules of malonyl-CoA. The polyketide chain is then reductively released as an aldehyde. The oxidoreductases srdC, srdD and srdE then oxidize one of the hydroxy groups to facilitate the intramolecular aldol condensation, followed by dehydration to yield a salicylic aldehyde. This aldehyde can undergo facile reduction by endogenous reductases to yield the alcohol 1-hydroxy-2-hydroxymethyl-3-pent-1,3-dienylbenzene. The flavin-dependent srdI counteract against the propensity of the aldehydes to be reduced under physiological conditions and is responsible for reoxidizing 1-hydroxy-2-hydroxymethyl-3-pent-1,3-dienylbenzene back to the salicylic aldehyde. This salicylic aldehyde is then selectively epoxidized by the cupin-domain-containing oxidoreductase srdB to yield the epoxide, which can be hydrolyzed stereoselectively by the hydrolase srdG to give the final product sordarial. The polypeptide is Highly reducing polyketide synthase srdA (Neurospora crassa (strain ATCC 24698 / 74-OR23-1A / CBS 708.71 / DSM 1257 / FGSC 987)).